Reading from the N-terminus, the 555-residue chain is Probable Xaa-Pro aminopeptidase BC1G_13431 (555 aa).

Mn(2+) is bound by residues Asp303, Asp314, Glu458, and Glu499. The interval Glu527–Trp555 is disordered. Over residues Glu538–Arg547 the composition is skewed to basic and acidic residues.

This sequence belongs to the peptidase M24B family. It depends on Mn(2+) as a cofactor.

It catalyses the reaction Release of any N-terminal amino acid, including proline, that is linked to proline, even from a dipeptide or tripeptide.. Its function is as follows. Catalyzes the removal of a penultimate prolyl residue from the N-termini of peptides. The protein is Probable Xaa-Pro aminopeptidase BC1G_13431 of Botryotinia fuckeliana (strain B05.10) (Noble rot fungus).